Consider the following 193-residue polypeptide: Bcl-2-like protein 2 (193 aa).

Residue A2 is modified to N-acetylalanine. The BH4 signature appears at 9–29 (DTRALVADFVGYKLRQKGYVC). A BH1 motif is present at residues 85–104 (ELFQGGPNWGRLVAFFVFGA). The short motif at 136–151 (DWIHSSGGWAEFTALY) is the BH2 element.

It belongs to the Bcl-2 family. In terms of assembly, interacts with HIF3A isoform 2 (via C-terminus domain). Interacts with BOP. Expressed in almost all myeloid cell lines and in a wide range of tissues, with highest levels in brain, colon, and salivary gland.

It localises to the mitochondrion membrane. Its function is as follows. Promotes cell survival. Blocks dexamethasone-induced apoptosis. Mediates survival of postmitotic Sertoli cells by suppressing death-promoting activity of BAX. The sequence is that of Bcl-2-like protein 2 (Bcl2l2) from Mus musculus (Mouse).